Here is a 224-residue protein sequence, read N- to C-terminus: MNIIFFGPNGSGKGTQGSILKDKYKIAHIESGAIFRDNIKGGTDLGMKAKAYIDKGDLVPDEITIPMILDRLKQDDCAKGWLLDGFPRNKVQAEKLDASLKKEKMKLDIIIEMLLDRQIAKDRIMGRRLCENDNNHPNNIFIDAIKPNGDKCRVCGGALSSRADDQDETAIDKRHSIYYNDVDGTLAAAYYFRDLAKKDDSIKYITLEGKNALPDVTKELVSKL.

Residue 10 to 15 (GSGKGT) participates in ATP binding. The segment at 30-59 (ESGAIFRDNIKGGTDLGMKAKAYIDKGDLV) is NMP. Residues S31, R36, 57 to 59 (DLV), 85 to 88 (GFPR), and Q92 each bind AMP. Residues 126-165 (GRRLCENDNNHPNNIFIDAIKPNGDKCRVCGGALSSRADD) are LID. Residue R127 participates in ATP binding. Positions 162 and 174 each coordinate AMP. Residue N211 coordinates ATP.

The protein belongs to the adenylate kinase family. Monomer.

Its subcellular location is the cytoplasm. It catalyses the reaction AMP + ATP = 2 ADP. Its pathway is purine metabolism; AMP biosynthesis via salvage pathway; AMP from ADP: step 1/1. Catalyzes the reversible transfer of the terminal phosphate group between ATP and AMP. Plays an important role in cellular energy homeostasis and in adenine nucleotide metabolism. In Desulforapulum autotrophicum (strain ATCC 43914 / DSM 3382 / VKM B-1955 / HRM2) (Desulfobacterium autotrophicum), this protein is Adenylate kinase.